Reading from the N-terminus, the 390-residue chain is Altered inheritance of mitochondria protein 6 (390 aa).

Positions 1-26 are cleaved as a signal peptide; it reads MLGLKGCLTILIGYVIAVCALFSSRG.

It belongs to the AIM6 family.

The sequence is that of Altered inheritance of mitochondria protein 6 (AIM6) from Saccharomyces cerevisiae (strain YJM789) (Baker's yeast).